A 121-amino-acid polypeptide reads, in one-letter code: uncharacterized protein (121 aa).

Disordered stretches follow at residues 1 to 28 (MGCA…QNGD) and 60 to 81 (QENL…EIPG). A phosphoserine mark is found at Ser95 and Ser115.

This is an uncharacterized protein from Mus musculus (Mouse).